We begin with the raw amino-acid sequence, 756 residues long: Deoxynucleotidyltransferase terminal-interacting protein 2 (756 aa).

Residues 1-99 (MVVTRSARAK…AESNYSVSEH (99 aa)) form a disordered region. Positions 9 to 21 (AKASIQAASAESS) are enriched in low complexity. Ser-21 is modified (phosphoserine). Polar residues-rich tracts occupy residues 35–55 (PESSTGSDARTTAESQTTGKQ) and 80–96 (EPSTDGETSEAESNYSV). Phosphoserine is present on Ser-117. A Phosphothreonine modification is found at Thr-129. Phosphoserine is present on residues Ser-141, Ser-145, Ser-148, Ser-184, and Ser-194. The interval 156-261 (PTEKTTGARR…LSEINKPNFY (106 aa)) is disordered. Over residues 201-211 (RRTRSMQRKLK) the composition is skewed to basic residues. Glycyl lysine isopeptide (Lys-Gly) (interchain with G-Cter in SUMO2) cross-links involve residues Lys-217 and Lys-220. The residue at position 232 (Thr-232) is a Phosphothreonine. A phosphoserine mark is found at Ser-239, Ser-251, and Ser-253. Over residues 242–256 (RQTSHLQARSLSEIN) the composition is skewed to polar residues. Glycyl lysine isopeptide (Lys-Gly) (interchain with G-Cter in SUMO2) cross-links involve residues Lys-257, Lys-316, and Lys-321. A phosphoserine mark is found at Ser-324 and Ser-330. Lys-345 is covalently cross-linked (Glycyl lysine isopeptide (Lys-Gly) (interchain with G-Cter in SUMO2)). Ser-381 is subject to Phosphoserine. Residue Lys-384 forms a Glycyl lysine isopeptide (Lys-Gly) (interchain with G-Cter in SUMO2) linkage. Ser-434 and Ser-512 each carry phosphoserine. Residues 505 to 542 (LEEEDKASEVAIEEEKEEEEDEKSEEDSSDHDENEDEF) are a coiled coil. Residues 510 to 547 (KASEVAIEEEKEEEEDEKSEEDSSDHDENEDEFSDEED) are disordered. The segment at 548–605 (FLNSTKAKLLKLTSSSIDPGLSIKQLGGLYINFNADKLQSNKRTLTQIKEKKKNELLQ) is tdBR region; mediates interaction with DNTT. Lys-558 is covalently cross-linked (Glycyl lysine isopeptide (Lys-Gly) (interchain with G-Cter in SUMO2)). Residue Ser-569 is modified to Phosphoserine. Glycyl lysine isopeptide (Lys-Gly) (interchain with G-Cter in SUMO2) cross-links involve residues Lys-584 and Lys-606. Thr-610 is modified (phosphothreonine). Residues Lys-626, Lys-649, Lys-658, Lys-686, and Lys-731 each participate in a glycyl lysine isopeptide (Lys-Gly) (interchain with G-Cter in SUMO2) cross-link.

As to quaternary structure, forms a ternary complex with DNTT and core histone; interaction with PCNA releases DNTT and H2A/H2B histones from this ternary complex. Interacts with ESR1, ESR2, PPARG and RXRA. Part of the small subunit (SSU) processome, composed of more than 70 proteins and the RNA chaperone small nucleolar RNA (snoRNA) U3. As to expression, widely expressed with higher levels in testis.

The protein localises to the nucleus. It localises to the nucleolus. Regulates the transcriptional activity of DNTT and ESR1. May function as a chromatin remodeling protein. Part of the small subunit (SSU) processome, first precursor of the small eukaryotic ribosomal subunit. During the assembly of the SSU processome in the nucleolus, many ribosome biogenesis factors, an RNA chaperone and ribosomal proteins associate with the nascent pre-rRNA and work in concert to generate RNA folding, modifications, rearrangements and cleavage as well as targeted degradation of pre-ribosomal RNA by the RNA exosome. The polypeptide is Deoxynucleotidyltransferase terminal-interacting protein 2 (Homo sapiens (Human)).